A 430-amino-acid chain; its full sequence is Trigger factor (430 aa).

Residues threonine 165 to proline 250 form the PPIase FKBP-type domain.

It belongs to the FKBP-type PPIase family. Tig subfamily.

The protein localises to the cytoplasm. The enzyme catalyses [protein]-peptidylproline (omega=180) = [protein]-peptidylproline (omega=0). Involved in protein export. Acts as a chaperone by maintaining the newly synthesized protein in an open conformation. Functions as a peptidyl-prolyl cis-trans isomerase. The chain is Trigger factor from Onion yellows phytoplasma (strain OY-M).